A 935-amino-acid chain; its full sequence is MASVLEKVLRVGEGRVLRRLEAYAKAVSALEDDFSALADDELMHETVELRERYSKGESLDDLLPEAFAAVREASKRTLGMRHFDVQIMGGAALHLGNIAEMKTGEGKTLVATTAAYLNAITSRGVHVITVNDYLASYQSELMGRVFRALGMTTGVILAGQTPEERREQYAADITYGTNNEFGFDYLRDNMAWQASDMVQRGHYFAIVDEVDSILIDEARTPLIISGPSSGEANRWFNEFANLAKRLEPQVDYEVDEKKRTVGVLESGIEKVEDYLGIDNLYESANTPLISFLNNAIKANALFKRDKDYVVMNGEVLIVDEHTGRILVGRRYNEGIHQAIEAKEGVEVRAENQTLATVTLQNYFRLYKKLSGMTGTAETEAAEFMSTYKLGVVPIPTNKPMQRIDQDDLIYKNEKAKFDQVVEDIAKRHEKGQPVLVGTTSVEKSEYLSRLLAKKGVRHEVLNAKNHAREAAIVAQAGRLGSVTVATNMAGRGTDIMLGGNAEFIAVAEMNARGLSPVQTPEEYEAAWDQVFGVVKATVAGEAEEVIKAGGLYVLGTERHESRRIDNQLRGRSGRQGDPGESRFYLSLTDDLMRLFNAGAAESLMGRTSVPDDMAIESKVVSRAIRSAQSQVEARNAEIRKNVLKYDDVLNRQREAIYGDRRHILEGDDLHERVQTFLTEVVDDILDQHTGEGSGDDWDFDALWAELKTLYPVGVSIDEVIAEAGNKGRINRDFMRREILSDARIAYKSREESLGETAMRELERRVVLSVIDRRWRDHLYEMDYLKDGIGLRAMAQRDPLVEYQREGYAMFQQMMGAIREETIGFLFNLEVEVNQAPNGVESSAVAAKGLARGDSEARLSYSAPGERGEVEVRNQRGQIEQAATARAQQHSSAAVAAPEQGATQRGAFGQRVSAADDAAPANRAERRAQKKPTKRH.

ATP-binding positions include Gln86, 104 to 108, and Asp494; that span reads GEGKT. The tract at residues 879–935 is disordered; sequence EQAATARAQQHSSAAVAAPEQGATQRGAFGQRVSAADDAAPANRAERRAQKKPTKRH.

Belongs to the SecA family. In terms of assembly, monomer and homodimer. Part of the essential Sec protein translocation apparatus which comprises SecA, SecYEG and auxiliary proteins SecDF. Other proteins may also be involved.

The protein localises to the cell membrane. Its subcellular location is the cytoplasm. The enzyme catalyses ATP + H2O + cellular proteinSide 1 = ADP + phosphate + cellular proteinSide 2.. In terms of biological role, part of the Sec protein translocase complex. Interacts with the SecYEG preprotein conducting channel. Has a central role in coupling the hydrolysis of ATP to the transfer of proteins into and across the cell membrane, serving as an ATP-driven molecular motor driving the stepwise translocation of polypeptide chains across the membrane. In Leifsonia xyli subsp. xyli (strain CTCB07), this protein is Protein translocase subunit SecA.